Consider the following 370-residue polypeptide: Quinolinate synthase (370 aa).

Iminosuccinate-binding residues include histidine 62 and serine 83. Cysteine 128 is a binding site for [4Fe-4S] cluster. Iminosuccinate is bound by residues 154-156 (YAN) and serine 171. Cysteine 215 lines the [4Fe-4S] cluster pocket. Iminosuccinate contacts are provided by residues 241-243 (HPE) and threonine 258. Residue cysteine 312 coordinates [4Fe-4S] cluster.

This sequence belongs to the quinolinate synthase family. Type 1 subfamily. It depends on [4Fe-4S] cluster as a cofactor.

Its subcellular location is the cytoplasm. The catalysed reaction is iminosuccinate + dihydroxyacetone phosphate = quinolinate + phosphate + 2 H2O + H(+). Its pathway is cofactor biosynthesis; NAD(+) biosynthesis; quinolinate from iminoaspartate: step 1/1. In terms of biological role, catalyzes the condensation of iminoaspartate with dihydroxyacetone phosphate to form quinolinate. The chain is Quinolinate synthase from Neisseria meningitidis serogroup C / serotype 2a (strain ATCC 700532 / DSM 15464 / FAM18).